Here is a 66-residue protein sequence, read N- to C-terminus: Large ribosomal subunit protein bL31 (66 aa).

Zn(2+) contacts are provided by Cys16, Cys18, Cys36, and Cys39.

It belongs to the bacterial ribosomal protein bL31 family. Type A subfamily. In terms of assembly, part of the 50S ribosomal subunit. Zn(2+) is required as a cofactor.

In terms of biological role, binds the 23S rRNA. This is Large ribosomal subunit protein bL31 from Campylobacter lari (strain RM2100 / D67 / ATCC BAA-1060).